The chain runs to 2511 residues: Chromodomain-helicase-DNA-binding protein 8 (2511 aa).

The tract at residues 484–615 is disordered; that stretch reads PRVLNQDELP…RSNRQVKRKK (132 aa). Gly residues predominate over residues 515–524; it reads GGGVGGGGGG. Basic residues predominate over residues 604–615; that stretch reads KRRSNRQVKRKK. 2 consecutive Chromo domains span residues 680 to 745 and 760 to 826; these read AIVD…AQMR and VEVD…RTPR. Residues 859-1033 enclose the Helicase ATP-binding domain; that stretch reads LFNWYNRQNC…FSLLHFLEPA (175 aa). 872–879 serves as a coordination point for ATP; sequence DEMGLGKT. The DEAH box signature appears at 984–987; the sequence is DEAH. One can recognise a Helicase C-terminal domain in the interval 1174-1330; that stretch reads LLDKLLPRLK…SMSGNKESSI (157 aa). 4 disordered regions span residues 1440–1482, 1715–1736, 2086–2168, and 2468–2511; these read TRQF…HSGG, EQQAADPELGEGGDYDKYSEDP, SKNN…LTDP, and PSAL…SSED. Positions 1452 to 1461 are enriched in acidic residues; the sequence is DLSDLDSDDD. Residues 2111–2125 show a composition bias toward low complexity; that stretch reads DSGSSSSSRHSGSSD.

This sequence belongs to the SNF2/RAD54 helicase family. CHD8 subfamily. Component of some MLL1/MLL complex.

The protein resides in the nucleus. It catalyses the reaction ATP + H2O = ADP + phosphate + H(+). Its function is as follows. ATP-dependent chromatin-remodeling factor, it slides nucleosomes along DNA; nucleosome sliding requires ATP. Acts as a transcription repressor by remodeling chromatin structure and recruiting histone H1 to target genes. Suppresses p53/tp53-mediated apoptosis by recruiting histone H1 and preventing p53/tp53 transactivation activity. Acts as a negative regulator of Wnt signaling pathway by regulating beta-catenin (ctnnb1) activity. Negatively regulates ctnnb1-targeted gene expression by being recruited specifically to the promoter regions of several ctnnb1 responsive genes. May also act as a transcription activator by participating in efficient U6 RNA polymerase III transcription. The chain is Chromodomain-helicase-DNA-binding protein 8 from Danio rerio (Zebrafish).